Consider the following 483-residue polypeptide: Glutamate--tRNA ligase 1 (483 aa).

The short motif at 9–19 (PSPTGFLHIGG) is the 'HIGH' region element. The 'KMSKS' region signature appears at 238-242 (KLSKR). K241 serves as a coordination point for ATP.

This sequence belongs to the class-I aminoacyl-tRNA synthetase family. Glutamate--tRNA ligase type 1 subfamily. As to quaternary structure, monomer.

Its subcellular location is the cytoplasm. The enzyme catalyses tRNA(Glu) + L-glutamate + ATP = L-glutamyl-tRNA(Glu) + AMP + diphosphate. In terms of biological role, catalyzes the attachment of glutamate to tRNA(Glu) in a two-step reaction: glutamate is first activated by ATP to form Glu-AMP and then transferred to the acceptor end of tRNA(Glu). This is Glutamate--tRNA ligase 1 from Bartonella henselae (strain ATCC 49882 / DSM 28221 / CCUG 30454 / Houston 1) (Rochalimaea henselae).